The following is a 392-amino-acid chain: tRNA-specific 2-thiouridylase MnmA (392 aa).

Residues 18 to 25 and Met-44 contribute to the ATP site; that span reads GMSGGVDS. The segment at 104–106 is interaction with target base in tRNA; it reads NPD. Cys-109 (nucleophile) is an active-site residue. The cysteines at positions 109 and 208 are disulfide-linked. Gly-133 provides a ligand contact to ATP. The tract at residues 158–160 is interaction with tRNA; that stretch reads KDQ. Cys-208 serves as the catalytic Cysteine persulfide intermediate. The interaction with tRNA stretch occupies residues 320-321; that stretch reads RY.

This sequence belongs to the MnmA/TRMU family.

It localises to the cytoplasm. It catalyses the reaction S-sulfanyl-L-cysteinyl-[protein] + uridine(34) in tRNA + AH2 + ATP = 2-thiouridine(34) in tRNA + L-cysteinyl-[protein] + A + AMP + diphosphate + H(+). Functionally, catalyzes the 2-thiolation of uridine at the wobble position (U34) of tRNA, leading to the formation of s(2)U34. The chain is tRNA-specific 2-thiouridylase MnmA from Marinobacter nauticus (strain ATCC 700491 / DSM 11845 / VT8) (Marinobacter aquaeolei).